A 169-amino-acid chain; its full sequence is MSDNTLYLRREKRFLVLLGIICLALIGGALYMQVVLDEAPCPLCILQRYALLFIAIFAFIGAAMPGRRSVTAFETLVTLSALGGIAAAGRHVWILAHPSDSCGIDVLQPIVDGLPLATLFPTGFQVSGFCTTPYPPVLGLSLAQWALTAFVLTAVLVPACIIRNRRKPY.

Topologically, residues 1–14 (MSDNTLYLRREKRF) are cytoplasmic. A helical membrane pass occupies residues 15 to 31 (LVLLGIICLALIGGALY). The Periplasmic portion of the chain corresponds to 32–49 (MQVVLDEAPCPLCILQRY). A disulfide bridge connects residues C41 and C44. Residues 50–65 (ALLFIAIFAFIGAAMP) form a helical membrane-spanning segment. Residues 66–72 (GRRSVTA) lie on the Cytoplasmic side of the membrane. Residues 73–89 (FETLVTLSALGGIAAAG) form a helical membrane-spanning segment. At 90 to 144 (RHVWILAHPSDSCGIDVLQPIVDGLPLATLFPTGFQVSGFCTTPYPPVLGLSLAQ) the chain is on the periplasmic side. Cysteines 102 and 130 form a disulfide. Residues 145 to 163 (WALTAFVLTAVLVPACIIR) form a helical membrane-spanning segment. Over 164–169 (NRRKPY) the chain is Cytoplasmic.

This sequence belongs to the DsbB family.

Its subcellular location is the cell inner membrane. In terms of biological role, required for disulfide bond formation in some periplasmic proteins. Acts by oxidizing the DsbA protein. The protein is Disulfide bond formation protein B 1 of Pseudomonas syringae pv. syringae (strain B728a).